We begin with the raw amino-acid sequence, 141 residues long: ATP synthase epsilon chain (141 aa).

The protein belongs to the ATPase epsilon chain family. F-type ATPases have 2 components, CF(1) - the catalytic core - and CF(0) - the membrane proton channel. CF(1) has five subunits: alpha(3), beta(3), gamma(1), delta(1), epsilon(1). CF(0) has three main subunits: a, b and c.

It is found in the cell inner membrane. Its function is as follows. Produces ATP from ADP in the presence of a proton gradient across the membrane. The chain is ATP synthase epsilon chain from Dechloromonas aromatica (strain RCB).